Reading from the N-terminus, the 207-residue chain is 3-demethoxyubiquinol 3-hydroxylase (207 aa).

Fe cation is bound by residues E56, E86, H89, E138, E170, and H173.

It belongs to the COQ7 family. It depends on Fe cation as a cofactor.

The protein localises to the cell membrane. The catalysed reaction is a 5-methoxy-2-methyl-3-(all-trans-polyprenyl)benzene-1,4-diol + AH2 + O2 = a 3-demethylubiquinol + A + H2O. It participates in cofactor biosynthesis; ubiquinone biosynthesis. Catalyzes the hydroxylation of 2-nonaprenyl-3-methyl-6-methoxy-1,4-benzoquinol during ubiquinone biosynthesis. In Dechloromonas aromatica (strain RCB), this protein is 3-demethoxyubiquinol 3-hydroxylase.